Here is a 68-residue protein sequence, read N- to C-terminus: UPF0434 protein H16_A0605 (68 aa).

Belongs to the UPF0434 family.

This is UPF0434 protein H16_A0605 from Cupriavidus necator (strain ATCC 17699 / DSM 428 / KCTC 22496 / NCIMB 10442 / H16 / Stanier 337) (Ralstonia eutropha).